The following is a 427-amino-acid chain: 5-hydroxybenzimidazole synthase BzaB (427 aa).

Belongs to the ThiC family. 5-hydroxybenzimidazole synthase subfamily. Requires [4Fe-4S] cluster as cofactor.

It carries out the reaction 5-amino-1-(5-phospho-beta-D-ribosyl)imidazole + AH2 + S-adenosyl-L-methionine = 5-hydroxybenzimidazole + 5'-deoxyadenosine + formate + L-methionine + A + NH4(+) + phosphate + 2 H(+). It participates in cofactor biosynthesis; adenosylcobalamin biosynthesis. In terms of biological role, together with BzaA, catalyzes the conversion of aminoimidazole ribotide (AIR) to 5-hydroxybenzimidazole (5-HBI) in a radical S-adenosyl-L-methionine (SAM)-dependent reaction. Is thus involved in the anaerobic biosynthesis of dimethylbenzimidazole (DMB), the lower axial ligand of vitamin B12 (cobalamin). Requires BzaA for catalytic activity, as BzaB alone displays no activity. The chain is 5-hydroxybenzimidazole synthase BzaB from Eubacterium limosum.